The sequence spans 161 residues: Non-secretory ribonuclease (161 aa).

Positions 1 to 27 (MVPKLFTSQICLLLLLGLLAVEGSLHV) are cleaved as a signal peptide. A C-linked (Man) tryptophan glycan is attached at Trp34. The active-site Proton acceptor is His42. N-linked (GlcNAc...) asparagine glycosylation is present at Asn44. Cystine bridges form between Cys50–Cys110, Cys64–Cys123, Cys82–Cys138, and Cys89–Cys98. Tyr60 bears the 3'-nitrotyrosine mark. 65–69 (KNQNT) is a binding site for substrate. N-linked (GlcNAc...) asparagine glycosylation is found at Asn86, Asn92, Asn111, and Asn119. His156 functions as the Proton donor in the catalytic mechanism.

Belongs to the pancreatic ribonuclease family. In terms of assembly, interacts with and forms a tight 1:1 complex with RNH1. Dimerization of two such complexes may occur.

It localises to the lysosome. The protein resides in the cytoplasmic granule. It carries out the reaction an [RNA] containing cytidine + H2O = an [RNA]-3'-cytidine-3'-phosphate + a 5'-hydroxy-ribonucleotide-3'-[RNA].. The catalysed reaction is an [RNA] containing uridine + H2O = an [RNA]-3'-uridine-3'-phosphate + a 5'-hydroxy-ribonucleotide-3'-[RNA].. This is a non-secretory ribonuclease. It is a pyrimidine specific nuclease with a slight preference for U. Cytotoxin and helminthotoxin. Possesses a wide variety of biological activities. In Gorilla gorilla gorilla (Western lowland gorilla), this protein is Non-secretory ribonuclease (RNASE2).